A 703-amino-acid polypeptide reads, in one-letter code: Fanconi anemia group B protein homolog (703 aa).

In terms of assembly, belongs to the multisubunit FA complex composed of FANCA, FANCB, FANCC, FANCE, FANCF, FANCG, FANCL/PHF9 and FANCM.

The protein localises to the nucleus. Functionally, DNA repair protein required for FANCD2 ubiquitination. The protein is Fanconi anemia group B protein homolog (Fancb) of Mus musculus (Mouse).